A 466-amino-acid polypeptide reads, in one-letter code: UDP-N-acetylmuramoylalanine--D-glutamate ligase (466 aa).

Position 122-128 (122-128 (GTNGKTT)) interacts with ATP.

Belongs to the MurCDEF family.

It is found in the cytoplasm. The enzyme catalyses UDP-N-acetyl-alpha-D-muramoyl-L-alanine + D-glutamate + ATP = UDP-N-acetyl-alpha-D-muramoyl-L-alanyl-D-glutamate + ADP + phosphate + H(+). Its pathway is cell wall biogenesis; peptidoglycan biosynthesis. Functionally, cell wall formation. Catalyzes the addition of glutamate to the nucleotide precursor UDP-N-acetylmuramoyl-L-alanine (UMA). This chain is UDP-N-acetylmuramoylalanine--D-glutamate ligase, found in Aromatoleum aromaticum (strain DSM 19018 / LMG 30748 / EbN1) (Azoarcus sp. (strain EbN1)).